The chain runs to 223 residues: Flagellar L-ring protein 2 (223 aa).

Residues 1–17 (MKWLSKSWAVAVVLLVG) form the signal peptide. C18 carries the N-palmitoyl cysteine lipid modification. A lipid anchor (S-diacylglycerol cysteine) is attached at C18.

This sequence belongs to the FlgH family. As to quaternary structure, the basal body constitutes a major portion of the flagellar organelle and consists of four rings (L,P,S, and M) mounted on a central rod.

The protein localises to the cell outer membrane. The protein resides in the bacterial flagellum basal body. Functionally, assembles around the rod to form the L-ring and probably protects the motor/basal body from shearing forces during rotation. This Vibrio parahaemolyticus serotype O3:K6 (strain RIMD 2210633) protein is Flagellar L-ring protein 2.